Reading from the N-terminus, the 168-residue chain is Endoribonuclease YbeY (168 aa).

3 residues coordinate Zn(2+): His123, His127, and His133.

It belongs to the endoribonuclease YbeY family. The cofactor is Zn(2+).

The protein localises to the cytoplasm. Functionally, single strand-specific metallo-endoribonuclease involved in late-stage 70S ribosome quality control and in maturation of the 3' terminus of the 16S rRNA. The sequence is that of Endoribonuclease YbeY from Francisella tularensis subsp. tularensis (strain SCHU S4 / Schu 4).